A 204-amino-acid polypeptide reads, in one-letter code: UPF0637 protein SAS1041 (204 aa).

Belongs to the UPF0637 family.

This Staphylococcus aureus (strain MSSA476) protein is UPF0637 protein SAS1041.